The chain runs to 396 residues: E3 ubiquitin-protein transferase MAEA (396 aa).

The segment at Met1–Arg124 is extracellular and involved in cell to cell contact. Thr28 is modified (phosphothreonine). The region spanning Lys121–Asp153 is the LisH domain. Residues Met159–Asp216 form the CTLH domain. The RING-Gid-type zinc finger occupies Cys314–Thr381.

Identified in the CTLH complex that contains GID4, RANBP9 and/or RANBP10, MKLN1, MAEA, RMND5A (or alternatively its paralog RMND5B), GID8, ARMC8, WDR26 and YPEL5. Within this complex, MAEA, RMND5A (or alternatively its paralog RMND5B), GID8, WDR26, and RANBP9 and/or RANBP10 form the catalytic core, while GID4, MKLN1, ARMC8 and YPEL5 have ancillary roles. Interacts with F-actin. Post-translationally, autoubiquitinated as component of the CTLH E3 ubiquitin-protein ligase complex (in vitro). In terms of tissue distribution, detected in embryonic fibroblasts. Detected in macrophages. Detected in heart. liver, spleen and kidney (at protein level).

It is found in the cytoplasm. The protein resides in the nucleus. It localises to the nucleoplasm. The protein localises to the nucleus matrix. Its subcellular location is the cell membrane. It is found in the cytoskeleton. It carries out the reaction S-ubiquitinyl-[E2 ubiquitin-conjugating enzyme]-L-cysteine + [acceptor protein]-L-lysine = [E2 ubiquitin-conjugating enzyme]-L-cysteine + N(6)-ubiquitinyl-[acceptor protein]-L-lysine.. Functionally, core component of the CTLH E3 ubiquitin-protein ligase complex that selectively accepts ubiquitin from UBE2H and mediates ubiquitination and subsequent proteasomal degradation of the transcription factor HBP1. MAEA and RMND5A are both required for catalytic activity of the CTLH E3 ubiquitin-protein ligase complex. MAEA is required for normal cell proliferation. The CTLH E3 ubiquitin-protein ligase complex is not required for the degradation of enzymes involved in gluconeogenesis, such as FBP1. Plays a role in erythroblast enucleation during erythrocyte maturation and in the development of mature macrophages. Mediates the attachment of erythroid cell to mature macrophages; this MAEA-mediated contact inhibits erythroid cell apoptosis. Participates in erythroblastic island formation, which is the functional unit of definitive erythropoiesis. Associates with F-actin to regulate actin distribution in erythroblasts and macrophages. May contribute to nuclear architecture and cells division events. This is E3 ubiquitin-protein transferase MAEA (Maea) from Mus musculus (Mouse).